A 512-amino-acid polypeptide reads, in one-letter code: AMP phosphorylase (512 aa).

AMP contacts are provided by residues Gly166, 192-197 (SRAITG), and Thr201. Asp254 functions as the Proton donor in the catalytic mechanism. Residues Ser262 and Lys286 each contribute to the AMP site.

Belongs to the thymidine/pyrimidine-nucleoside phosphorylase family. Type 2 subfamily.

The catalysed reaction is AMP + phosphate = alpha-D-ribose 1,5-bisphosphate + adenine. It catalyses the reaction CMP + phosphate = cytosine + alpha-D-ribose 1,5-bisphosphate. It carries out the reaction UMP + phosphate = alpha-D-ribose 1,5-bisphosphate + uracil. Its function is as follows. Catalyzes the conversion of AMP and phosphate to adenine and ribose 1,5-bisphosphate (R15P). Exhibits phosphorylase activity toward CMP and UMP in addition to AMP. Functions in an archaeal AMP degradation pathway, together with R15P isomerase and RubisCO. The chain is AMP phosphorylase from Methanothrix thermoacetophila (strain DSM 6194 / JCM 14653 / NBRC 101360 / PT) (Methanosaeta thermophila).